The chain runs to 414 residues: Serine hydroxymethyltransferase (414 aa).

(6S)-5,6,7,8-tetrahydrofolate-binding positions include Leu118 and 122–124; that span reads GHL. Residue Lys226 is modified to N6-(pyridoxal phosphate)lysine. 353 to 355 is a (6S)-5,6,7,8-tetrahydrofolate binding site; it reads SPF.

Belongs to the SHMT family. In terms of assembly, homodimer. Pyridoxal 5'-phosphate serves as cofactor.

Its subcellular location is the cytoplasm. It catalyses the reaction (6R)-5,10-methylene-5,6,7,8-tetrahydrofolate + glycine + H2O = (6S)-5,6,7,8-tetrahydrofolate + L-serine. The protein operates within one-carbon metabolism; tetrahydrofolate interconversion. Its pathway is amino-acid biosynthesis; glycine biosynthesis; glycine from L-serine: step 1/1. In terms of biological role, catalyzes the reversible interconversion of serine and glycine with tetrahydrofolate (THF) serving as the one-carbon carrier. This reaction serves as the major source of one-carbon groups required for the biosynthesis of purines, thymidylate, methionine, and other important biomolecules. Also exhibits THF-independent aldolase activity toward beta-hydroxyamino acids, producing glycine and aldehydes, via a retro-aldol mechanism. In Blochmanniella floridana, this protein is Serine hydroxymethyltransferase.